We begin with the raw amino-acid sequence, 276 residues long: S-adenosylmethionine decarboxylase proenzyme (276 aa).

Serine 124 (schiff-base intermediate with substrate; via pyruvic acid) is an active-site residue. Serine 124 carries the pyruvic acid (Ser); by autocatalysis modification. The active-site Proton acceptor; for processing activity is histidine 129. Catalysis depends on cysteine 152, which acts as the Proton donor; for catalytic activity.

Belongs to the prokaryotic AdoMetDC family. Type 2 subfamily. Heterooctamer of four alpha and four beta chains arranged as a tetramer of alpha/beta heterodimers. Pyruvate serves as cofactor. Post-translationally, is synthesized initially as an inactive proenzyme. Formation of the active enzyme involves a self-maturation process in which the active site pyruvoyl group is generated from an internal serine residue via an autocatalytic post-translational modification. Two non-identical subunits are generated from the proenzyme in this reaction, and the pyruvate is formed at the N-terminus of the alpha chain, which is derived from the carboxyl end of the proenzyme. The post-translation cleavage follows an unusual pathway, termed non-hydrolytic serinolysis, in which the side chain hydroxyl group of the serine supplies its oxygen atom to form the C-terminus of the beta chain, while the remainder of the serine residue undergoes an oxidative deamination to produce ammonia and the pyruvoyl group blocking the N-terminus of the alpha chain.

It carries out the reaction S-adenosyl-L-methionine + H(+) = S-adenosyl 3-(methylsulfanyl)propylamine + CO2. The protein operates within amine and polyamine biosynthesis; S-adenosylmethioninamine biosynthesis; S-adenosylmethioninamine from S-adenosyl-L-methionine: step 1/1. In terms of biological role, catalyzes the decarboxylation of S-adenosylmethionine to S-adenosylmethioninamine (dcAdoMet), the propylamine donor required for the synthesis of the polyamines spermine and spermidine from the diamine putrescine. The chain is S-adenosylmethionine decarboxylase proenzyme from Desulfitobacterium hafniense (strain DSM 10664 / DCB-2).